We begin with the raw amino-acid sequence, 235 residues long: Transmembrane protein 215 (235 aa).

A run of 2 helical transmembrane segments spans residues 12-32 and 40-60; these read LVVALVSVFLVFGFMFTVSGM and IPLLAIGPAICLPGIAAIALA. The tract at residues 99 to 145 is disordered; it reads SDLESGKGSSDELAKKAGLRGKPPPQSQGEVSVASSINSPTPTEEGE. Residues 125–140 are compositionally biased toward polar residues; the sequence is SQGEVSVASSINSPTP.

It localises to the membrane. This chain is Transmembrane protein 215 (TMEM215), found in Homo sapiens (Human).